Here is a 732-residue protein sequence, read N- to C-terminus: Elongation factor 2 (732 aa).

The 210-residue stretch at 19-228 folds into the tr-type G domain; that stretch reads ELVRNIGIVA…TKITFKDIVE (210 aa). GTP-binding positions include 28–35, 94–98, and 148–151; these read AHIDHGKT, DTPGH, and NKID. Position 598 is a diphthamide (H598).

Belongs to the TRAFAC class translation factor GTPase superfamily. Classic translation factor GTPase family. EF-G/EF-2 subfamily.

The protein resides in the cytoplasm. In terms of biological role, catalyzes the GTP-dependent ribosomal translocation step during translation elongation. During this step, the ribosome changes from the pre-translocational (PRE) to the post-translocational (POST) state as the newly formed A-site-bound peptidyl-tRNA and P-site-bound deacylated tRNA move to the P and E sites, respectively. Catalyzes the coordinated movement of the two tRNA molecules, the mRNA and conformational changes in the ribosome. This is Elongation factor 2 from Thermoplasma volcanium (strain ATCC 51530 / DSM 4299 / JCM 9571 / NBRC 15438 / GSS1).